We begin with the raw amino-acid sequence, 607 residues long: UvrABC system protein C (607 aa).

Positions 12–91 (DSPGVYLYKD…IKRYRPRYNI (80 aa)) constitute a GIY-YIG domain. A UVR domain is found at 200–235 (ENLIKKLKKEMAIASDNLEFERAAKLRDQILALEKI).

The protein belongs to the UvrC family. As to quaternary structure, interacts with UvrB in an incision complex.

It localises to the cytoplasm. In terms of biological role, the UvrABC repair system catalyzes the recognition and processing of DNA lesions. UvrC both incises the 5' and 3' sides of the lesion. The N-terminal half is responsible for the 3' incision and the C-terminal half is responsible for the 5' incision. In Carboxydothermus hydrogenoformans (strain ATCC BAA-161 / DSM 6008 / Z-2901), this protein is UvrABC system protein C.